Here is a 581-residue protein sequence, read N- to C-terminus: Cytosolic Fe-S cluster assembly factor nar-1 (581 aa).

Positions 20, 68, 71, 74, 215, 270, 457, and 461 each coordinate [4Fe-4S] cluster.

Belongs to the NARF family.

Component of the cytosolic Fe/S protein assembly machinery. Required for maturation of extramitochondrial Fe/S proteins. May play a role in the transfer of pre-assembled Fe/S clusters to target apoproteins. The chain is Cytosolic Fe-S cluster assembly factor nar-1 (nar-1) from Neurospora crassa (strain ATCC 24698 / 74-OR23-1A / CBS 708.71 / DSM 1257 / FGSC 987).